We begin with the raw amino-acid sequence, 233 residues long: MKLFDCAPLSLAWREFLQSEFKKPYFLEIEKRYLEALKSPKTIFPKSSNLFYALNLTPPSAVKIILLGQDPYHSTYLKNQQELPVAMGLSFSVGKNAPIPPSLKNIFKELHANLGVSVPCCGDLSAWAKRGMLLLNAILSVEKNQAASHKRIGWEAFSDQILMRLFEANAPLIVVLLGKIAQKKIALIPKNKHIIITAPHPSPLSRGFLGSGVFTSIQNAHREIYHKDFDFSL.

Catalysis depends on Asp70, which acts as the Proton acceptor.

This sequence belongs to the uracil-DNA glycosylase (UDG) superfamily. UNG family.

It localises to the cytoplasm. The enzyme catalyses Hydrolyzes single-stranded DNA or mismatched double-stranded DNA and polynucleotides, releasing free uracil.. Its function is as follows. Excises uracil residues from the DNA which can arise as a result of misincorporation of dUMP residues by DNA polymerase or due to deamination of cytosine. This is Uracil-DNA glycosylase from Helicobacter pylori (strain Shi470).